We begin with the raw amino-acid sequence, 649 residues long: WEB family protein At5g55860 (649 aa).

Coiled coils occupy residues 59–227 (EKVL…ACSQ), 267–356 (EFAK…IESV), and 391–461 (TINQ…MSEK). Over residues 443–453 (EAKAAETKALE) the composition is skewed to basic and acidic residues. The interval 443-483 (EAKAAETKALEQIKSMSEKTNAARNSTSSESGSQSITLSQE) is disordered. Over residues 456-467 (KSMSEKTNAARN) the composition is skewed to polar residues. Over residues 468-482 (STSSESGSQSITLSQ) the composition is skewed to low complexity. Positions 505 to 549 (AALAQVEAVRASENETLKKLETTQEEIKKLKTATEEALKKAAMAD) form a coiled coil. Positions 583-611 (MKMASESSPQQHYKAPKQKPVNNKLEKTK) are disordered.

It belongs to the WEB family.

The chain is WEB family protein At5g55860 from Arabidopsis thaliana (Mouse-ear cress).